Reading from the N-terminus, the 612-residue chain is Cytokine-like nuclear factor N-PAC (612 aa).

Residues 22–81 (PKDLIWAKMKGFTPWPGMIVEPPLDLLTQQRRANTKCVFFFGSRNFAWIEENNIKPFEGP) enclose the PWWP domain. The tract at residues 168–270 (AVEGENNADS…GASSSSPTAR (103 aa)) is disordered. Low complexity-rich tracts occupy residues 177 to 193 (SSASPTVTAATPATAKS) and 201 to 220 (AKPVSAVSATKAAKASTTKS). Positions 228–240 (AHQTPTGANTSGL) are enriched in polar residues. The interaction with histone H3 stretch occupies residues 276 to 279 (DDLL). The interval 319 to 612 (RDIVPSELTF…SSAVFVRSRF (294 aa)) is dehydrogenase domain. NAD(+) is bound by residues 329–343 (GFLGLGMMGSTIVKD), Thr421, and Arg564.

Belongs to the HIBADH-related family. NP60 subfamily. Binds to mononucleosomes. Interacts with male-specific lethal (MSL) histone acetyltransferase complex at least composed of mof, msl-1, msl-2 and msl-3.

Its subcellular location is the chromosome. Its function is as follows. Nucleosome-destabilizing factor that is recruited to genes during transcriptional activation and colocalizes with a subset of trimethylated 'Lys-36' histone H3 (H3K36me3)-enriched regions. Binds DNA (in vitro). Facilitates Pol II transcription through nucleosomes. Facilitates male-specific lethal (MSL) histone acetyltransferase complex targeting to active genes on the X chromosome. Stimulates the acetylation of 'Lys-56' of nucleosomal histone H3 (H3K56ac) by nej. The protein is Cytokine-like nuclear factor N-PAC of Drosophila pseudoobscura pseudoobscura (Fruit fly).